The following is a 349-amino-acid chain: Ferredoxin--NADP reductase 1 (349 aa).

The FAD site is built by E36, K44, Y48, I88, L123, D290, and S331.

Belongs to the ferredoxin--NADP reductase type 2 family. As to quaternary structure, homodimer. The cofactor is FAD.

The enzyme catalyses 2 reduced [2Fe-2S]-[ferredoxin] + NADP(+) + H(+) = 2 oxidized [2Fe-2S]-[ferredoxin] + NADPH. The chain is Ferredoxin--NADP reductase 1 from Bacillus thuringiensis (strain Al Hakam).